We begin with the raw amino-acid sequence, 529 residues long: Low affinity inorganic phosphate transporter 5 (529 aa).

The Cytoplasmic segment spans residues 1-21 (MASNNLNVLNALDTAHTQWYH). Residues 22–42 (VTAVVIAGMGFFTDAYDLFCI) form a helical membrane-spanning segment. The Extracellular segment spans residues 43–71 (STISKLLGRLYYYDPHTHAPGKLPHTVNN). The chain crosses the membrane as a helical span at residues 72 to 92 (WVTGVALVGTLTGQLVFGWLG). At 93–99 (DKLGRKK) the chain is on the cytoplasmic side. The helical transmembrane segment at 100-120 (VYGLTLILMVICALSSGLSFG) threads the bilayer. Residues 121 to 124 (YSRK) lie on the Extracellular side of the membrane. A helical membrane pass occupies residues 125-145 (VVIGTLCFFRFWLGFGIGGDY). The Cytoplasmic portion of the chain corresponds to 146 to 163 (PLSATIMSEYANKRTRGA). A helical transmembrane segment spans residues 164–184 (FIAAVFAMQGVGIIFAGLVLM). Topologically, residues 185–211 (TVSKVFLMRYAGKAFSTDEVFSTEPEA) are extracellular. A helical membrane pass occupies residues 212–232 (DYVWRIVLMLGALPALLTYYW). Residues 233-291 (RMKMPETGRYTAIIEGNAKQAAIDMGKVLEIEIQAEGEKLAKFKSANDYSLLSNEFFQR) lie on the Cytoplasmic side of the membrane. The helical transmembrane segment at 292–312 (HGLHLIGTMSTWFLLDIAFYS) threads the bilayer. Over 313–344 (QNLTQKDIFPTMGLVSDAKSISALREMFETSR) the chain is Extracellular. The N-linked (GlcNAc...) asparagine glycan is linked to Asn-314. The chain crosses the membrane as a helical span at residues 345 to 365 (AMFVIALLGTFPGYWFTVFFI). The Cytoplasmic portion of the chain corresponds to 366 to 374 (EKIGRFKIQ). A helical transmembrane segment spans residues 375-395 (LMGFFMMSIFMAIIGVRYDYL). Topologically, residues 396-405 (KTKDHKWTFA) are extracellular. A helical membrane pass occupies residues 406–426 (ALYGLTFFFANSGPNSTTFVL). Over 427–472 (PAELFPTRVRSTCHALSAASGKAGAMVSAFGVQQYTQDGEVHKIKK) the chain is Cytoplasmic. A helical membrane pass occupies residues 473 to 493 (AMLFLAFTNMVGFCCTFLVTE). The Extracellular portion of the chain corresponds to 494 to 529 (TKGRSLEEISGEDENQNETKMKGRPVSGGHQDDGWD). The disordered stretch occupies residues 500 to 529 (EEISGEDENQNETKMKGRPVSGGHQDDGWD). N-linked (GlcNAc...) asparagine glycosylation occurs at Asn-510.

It belongs to the major facilitator superfamily. Phosphate:H(+) symporter (TC 2.A.1.9) family. Expressed at low levels in non-mycorrhized roots.

It is found in the cell membrane. The enzyme catalyses phosphate(in) + H(+)(in) = phosphate(out) + H(+)(out). Low-affinity transporter for external inorganic phosphate (Pi) probably involved in the acquisition of phosphate released by arbuscular mycorrhizal (AM) fungi during AM symbiosis. The sequence is that of Low affinity inorganic phosphate transporter 5 from Petunia hybrida (Petunia).